Here is a 446-residue protein sequence, read N- to C-terminus: Signal recognition particle protein (446 aa).

Residues 106-113 (GLQGSGKT), 188-192 (DTAGR), and 246-249 (SKLD) each bind GTP.

Belongs to the GTP-binding SRP family. SRP54 subfamily. Part of the signal recognition particle protein translocation system, which is composed of SRP and FtsY.

The protein localises to the cytoplasm. It carries out the reaction GTP + H2O = GDP + phosphate + H(+). Functionally, involved in targeting and insertion of nascent membrane proteins into the cytoplasmic membrane. Binds to the hydrophobic signal sequence of the ribosome-nascent chain (RNC) as it emerges from the ribosomes. The SRP-RNC complex is then targeted to the cytoplasmic membrane where it interacts with the SRP receptor FtsY. The protein is Signal recognition particle protein of Mycoplasma genitalium (strain ATCC 33530 / DSM 19775 / NCTC 10195 / G37) (Mycoplasmoides genitalium).